A 147-amino-acid chain; its full sequence is MRLEDLRPTPGAMKKRKRVGRGPGSGHGKTSGRGHKGQKARGSGKVHIWFEGGQTPLHRRLPKRGFNNINKKVYAVVNVKVLEERFEANEEVTPEKLIERKIIKDLKDGIKILGDGELTKPLVVKAHAFSKSAVEKIESAGGKAEVI.

Residues 1-45 (MRLEDLRPTPGAMKKRKRVGRGPGSGHGKTSGRGHKGQKARGSGK) form a disordered region. Over residues 30 to 44 (TSGRGHKGQKARGSG) the composition is skewed to basic residues.

Belongs to the universal ribosomal protein uL15 family. Part of the 50S ribosomal subunit.

Functionally, binds to the 23S rRNA. This Thermotoga sp. (strain RQ2) protein is Large ribosomal subunit protein uL15.